A 142-amino-acid chain; its full sequence is Matrix protein (142 aa).

GMP contacts are provided by residues 64–66 and A117; that span reads DVE.

As to quaternary structure, homooligomer. Homotetramer. Interacts with phosphoprotein P. Binds to ssRNA. In terms of processing, not glycosylated.

Its subcellular location is the virion. The protein resides in the host cytoplasm. It is found in the host cell membrane. In terms of biological role, plays a crucial role in virion assembly and budding. The polypeptide is Matrix protein (M) (Bos taurus (Bovine)).